The chain runs to 452 residues: Friend leukemia integration 1 transcription factor (452 aa).

Ser39 is modified (phosphoserine). The PNT domain occupies 112-198; sequence PPPPNMTTNE…SHLSYLRESS (87 aa). Positions 209–271 are disordered; it reads DQSSRLSVKE…PYQILGPTSS (63 aa). Positions 215–226 are enriched in basic and acidic residues; it reads SVKEDPSYDSVR. Over residues 248 to 257 the composition is skewed to polar residues; the sequence is QTISKNTEQR. The ETS DNA-binding region spans 281–361; the sequence is IQLWQFLLEL…HGKRYAYKFD (81 aa). Positions 433–452 are disordered; that stretch reads NPNVPRHPNTHVPSHLGSYY.

This sequence belongs to the ETS family. In terms of assembly, can form homodimers or heterodimers with ETV6/TEL1.

The protein localises to the nucleus. Functionally, sequence-specific transcriptional activator. Recognizes the DNA sequence 5'-C[CA]GGAAGT-3'. The sequence is that of Friend leukemia integration 1 transcription factor (FLI1) from Homo sapiens (Human).